Consider the following 231-residue polypeptide: 7-cyano-7-deazaguanine synthase (231 aa).

An ATP-binding site is contributed by 8–18; the sequence is FSGGQDSTTCL. Cys-188, Cys-197, Cys-200, and Cys-203 together coordinate Zn(2+).

Belongs to the QueC family. Requires Zn(2+) as cofactor.

It carries out the reaction 7-carboxy-7-deazaguanine + NH4(+) + ATP = 7-cyano-7-deazaguanine + ADP + phosphate + H2O + H(+). The protein operates within purine metabolism; 7-cyano-7-deazaguanine biosynthesis. Functionally, catalyzes the ATP-dependent conversion of 7-carboxy-7-deazaguanine (CDG) to 7-cyano-7-deazaguanine (preQ(0)). This chain is 7-cyano-7-deazaguanine synthase, found in Salmonella agona (strain SL483).